A 66-amino-acid polypeptide reads, in one-letter code: Regulator of G-protein signaling 11 (66 aa).

The RGS domain maps to 1 to 66 (EACEELRFGG…DAAQLHIYML (66 aa)).

In terms of assembly, heterodimer with Gbeta5. Interacts with RGS7BP, leading to regulate the subcellular location of the heterodimer formed with Gbeta5.

In terms of biological role, inhibits signal transduction by increasing the GTPase activity of G protein alpha subunits thereby driving them into their inactive GDP-bound form. In Rattus norvegicus (Rat), this protein is Regulator of G-protein signaling 11 (Rgs11).